The sequence spans 143 residues: Large ribosomal subunit protein uL11 (143 aa).

It belongs to the universal ribosomal protein uL11 family. Part of the ribosomal stalk of the 50S ribosomal subunit. Interacts with L10 and the large rRNA to form the base of the stalk. L10 forms an elongated spine to which L12 dimers bind in a sequential fashion forming a multimeric L10(L12)X complex. In terms of processing, one or more lysine residues are methylated.

In terms of biological role, forms part of the ribosomal stalk which helps the ribosome interact with GTP-bound translation factors. This is Large ribosomal subunit protein uL11 from Burkholderia mallei (strain NCTC 10247).